The sequence spans 528 residues: uncharacterized protein (528 aa).

Residue 6-35 (DYVVVGTGSAGAVVASRLSTDPATTVVALE) coordinates FAD. Residue H468 is the Proton acceptor of the active site.

The protein belongs to the GMC oxidoreductase family. FAD is required as a cofactor.

This is an uncharacterized protein from Mycobacterium bovis (strain ATCC BAA-935 / AF2122/97).